The sequence spans 888 residues: Alanine--tRNA ligase (888 aa).

Residues His-564, His-568, Cys-676, and His-680 each contribute to the Zn(2+) site.

It belongs to the class-II aminoacyl-tRNA synthetase family. The cofactor is Zn(2+).

The protein localises to the cytoplasm. The catalysed reaction is tRNA(Ala) + L-alanine + ATP = L-alanyl-tRNA(Ala) + AMP + diphosphate. Its function is as follows. Catalyzes the attachment of alanine to tRNA(Ala) in a two-step reaction: alanine is first activated by ATP to form Ala-AMP and then transferred to the acceptor end of tRNA(Ala). Also edits incorrectly charged Ser-tRNA(Ala) and Gly-tRNA(Ala) via its editing domain. This Bartonella quintana (strain Toulouse) (Rochalimaea quintana) protein is Alanine--tRNA ligase.